A 1406-amino-acid chain; its full sequence is DNA-directed RNA polymerase subunit beta' (1406 aa).

C70, C72, C85, and C88 together coordinate Zn(2+). Positions 460, 462, and 464 each coordinate Mg(2+). 4 residues coordinate Zn(2+): C814, C889, C896, and C899.

This sequence belongs to the RNA polymerase beta' chain family. The RNAP catalytic core consists of 2 alpha, 1 beta, 1 beta' and 1 omega subunit. When a sigma factor is associated with the core the holoenzyme is formed, which can initiate transcription. Requires Mg(2+) as cofactor. It depends on Zn(2+) as a cofactor.

It catalyses the reaction RNA(n) + a ribonucleoside 5'-triphosphate = RNA(n+1) + diphosphate. Functionally, DNA-dependent RNA polymerase catalyzes the transcription of DNA into RNA using the four ribonucleoside triphosphates as substrates. The protein is DNA-directed RNA polymerase subunit beta' of Psychromonas ingrahamii (strain DSM 17664 / CCUG 51855 / 37).